A 194-amino-acid chain; its full sequence is Large ribosomal subunit protein uL6z/uL6y (194 aa).

T75 is modified (phosphothreonine).

Belongs to the universal ribosomal protein uL6 family.

The chain is Large ribosomal subunit protein uL6z/uL6y (RPL9B) from Arabidopsis thaliana (Mouse-ear cress).